The chain runs to 432 residues: Bouquet formation protein 4 (432 aa).

The interval 1 to 21 (MTENEKSRSLPAERNPLYKDD) is disordered. Positions 38–147 (EFPDGPATFV…SSTPSTYATP (110 aa)) constitute an HTH APSES-type domain. A DNA-binding region (H-T-H motif) is located at residues 73 to 94 (ATSMFRSAFPKATQEEEDLEMR). 2 stretches are compositionally biased toward low complexity: residues 139-152 (STPS…RPTA) and 163-172 (ESSTSATTTS). Disordered stretches follow at residues 139–283 (STPS…GKIR) and 364–384 (KSSI…FEEN). The span at 180-228 (RLAEHLENSKKTILQHDNKEEDKEIHSEENETKDEIKSEKKEPEIKKQE) shows a compositional bias: basic and acidic residues. Residues 229 to 241 (GGSSTEKVGQPSS) are compositionally biased toward polar residues.

As to quaternary structure, interacts with rap1.

Its subcellular location is the cytoplasm. The protein localises to the nucleus. It is found in the nucleus inner membrane. In terms of biological role, connects telomeres to the nuclear envelop (NE) during both vegetative growth and meiosis. This connection ensures clustering of telomeres to the spindle pole body (SPB) when cells enter meiotic prophase. This Schizosaccharomyces pombe (strain 972 / ATCC 24843) (Fission yeast) protein is Bouquet formation protein 4 (bqt4).